A 235-amino-acid polypeptide reads, in one-letter code: Vacuolar protein sorting-associated protein 60.1 (235 aa).

The disordered stretch occupies residues 1-29 (MRRVFGAKKNTEPPPSIQDASDRINKRGD). Positions 20-29 (ASDRINKRGD) are enriched in basic and acidic residues. The stretch at 99–148 (LKDAQQTMTALKSANKELKGMMKTVKIQDIDNLQDEMMDLMDVSSEIQES) forms a coiled coil. Positions 175–235 (MGNETEADGM…PAVPRASLRG (61 aa)) are disordered.

It belongs to the SNF7 family. As to quaternary structure, interacts with SKD1/VPS4 and LIP5. Interacts with VPS2.2.

Its subcellular location is the endosome. The protein localises to the multivesicular body membrane. Functionally, probable peripherally associated component of the endosomal sorting required for transport complex III (ESCRT-III) which is involved in multivesicular bodies (MVBs) formation and sorting of endosomal cargo proteins into MVBs. The chain is Vacuolar protein sorting-associated protein 60.1 from Arabidopsis thaliana (Mouse-ear cress).